A 330-amino-acid chain; its full sequence is Ketol-acid reductoisomerase (NADP(+)) (330 aa).

Residues 1 to 181 (MNVYYEQDAD…GGTKAGVIET (181 aa)) form the KARI N-terminal Rossmann domain. Residues 24 to 27 (YGSQ), Arg-47, Ser-50, Ser-52, and 82 to 85 (DQNQ) each bind NADP(+). His-107 is a catalytic residue. Residue Gly-133 participates in NADP(+) binding. Positions 182-327 (SIKNETETDL…AKLRDMMSWL (146 aa)) constitute a KARI C-terminal knotted domain. 4 residues coordinate Mg(2+): Asp-190, Glu-194, Glu-226, and Glu-230. Residue Ser-251 participates in substrate binding.

Belongs to the ketol-acid reductoisomerase family. Mg(2+) serves as cofactor.

It carries out the reaction (2R)-2,3-dihydroxy-3-methylbutanoate + NADP(+) = (2S)-2-acetolactate + NADPH + H(+). The catalysed reaction is (2R,3R)-2,3-dihydroxy-3-methylpentanoate + NADP(+) = (S)-2-ethyl-2-hydroxy-3-oxobutanoate + NADPH + H(+). Its pathway is amino-acid biosynthesis; L-isoleucine biosynthesis; L-isoleucine from 2-oxobutanoate: step 2/4. The protein operates within amino-acid biosynthesis; L-valine biosynthesis; L-valine from pyruvate: step 2/4. Functionally, involved in the biosynthesis of branched-chain amino acids (BCAA). Catalyzes an alkyl-migration followed by a ketol-acid reduction of (S)-2-acetolactate (S2AL) to yield (R)-2,3-dihydroxy-isovalerate. In the isomerase reaction, S2AL is rearranged via a Mg-dependent methyl migration to produce 3-hydroxy-3-methyl-2-ketobutyrate (HMKB). In the reductase reaction, this 2-ketoacid undergoes a metal-dependent reduction by NADPH to yield (R)-2,3-dihydroxy-isovalerate. In Pelodictyon phaeoclathratiforme (strain DSM 5477 / BU-1), this protein is Ketol-acid reductoisomerase (NADP(+)).